The primary structure comprises 521 residues: Cholesterol side-chain cleavage enzyme, mitochondrial (521 aa).

A mitochondrion-targeting transit peptide spans methionine 1–glycine 39. Cysteine 462 contacts heme.

The protein belongs to the cytochrome P450 family. Interacts with FDX1/adrenodoxin. Requires heme as cofactor.

It localises to the mitochondrion inner membrane. It catalyses the reaction 6 reduced [adrenodoxin] + cholesterol + 3 O2 + 6 H(+) = 4-methylpentanal + pregnenolone + 6 oxidized [adrenodoxin] + 4 H2O. The catalysed reaction is 2 reduced [adrenodoxin] + cholesterol + O2 + 2 H(+) = (22R)-hydroxycholesterol + 2 oxidized [adrenodoxin] + H2O. The enzyme catalyses (22R)-hydroxycholesterol + 2 reduced [adrenodoxin] + O2 + 2 H(+) = (20R,22R)-20,22-dihydroxycholesterol + 2 oxidized [adrenodoxin] + H2O. It carries out the reaction (20R,22R)-20,22-dihydroxycholesterol + 2 reduced [adrenodoxin] + O2 + 2 H(+) = 4-methylpentanal + pregnenolone + 2 oxidized [adrenodoxin] + 2 H2O. The protein operates within lipid metabolism; C21-steroid hormone metabolism. It participates in steroid metabolism; cholesterol metabolism. A cytochrome P450 monooxygenase that catalyzes the side-chain hydroxylation and cleavage of cholesterol to pregnenolone, the precursor of most steroid hormones. Catalyzes three sequential oxidation reactions of cholesterol, namely the hydroxylation at C22 followed with the hydroxylation at C20 to yield 20R,22R-hydroxycholesterol that is further cleaved between C20 and C22 to yield the C21-steroid pregnenolone and 4-methylpentanal. Mechanistically, uses molecular oxygen inserting one oxygen atom into a substrate and reducing the second into a water molecule. Two electrons are provided by NADPH via a two-protein mitochondrial transfer system comprising flavoprotein FDXR (adrenodoxin/ferredoxin reductase) and nonheme iron-sulfur protein FDX1 or FDX2 (adrenodoxin/ferredoxin). This chain is Cholesterol side-chain cleavage enzyme, mitochondrial (CYP11A1), found in Macaca fascicularis (Crab-eating macaque).